A 99-amino-acid chain; its full sequence is Phosphoribosyl-ATP pyrophosphatase (99 aa).

The protein belongs to the PRA-PH family.

The protein localises to the cytoplasm. It catalyses the reaction 1-(5-phospho-beta-D-ribosyl)-ATP + H2O = 1-(5-phospho-beta-D-ribosyl)-5'-AMP + diphosphate + H(+). It functions in the pathway amino-acid biosynthesis; L-histidine biosynthesis; L-histidine from 5-phospho-alpha-D-ribose 1-diphosphate: step 2/9. This Methanosphaerula palustris (strain ATCC BAA-1556 / DSM 19958 / E1-9c) protein is Phosphoribosyl-ATP pyrophosphatase.